The sequence spans 73 residues: Homeodomain-only protein (73 aa).

Residues 3–62 constitute a DNA-binding region (homeobox; degenerate); that stretch reads TETASGPTEDQVEILEYNFNKVNKHPDPTTLCLIAAEAGLSEEETQKWFKQRLAQWRRSE.

As to quaternary structure, interacts with serum response factor (SRF). Component of a large complex containing histone deacetylases such as HDAC2. Interacts with the acetylated forms of HSPA1A and HSPA1B. Interacts with HSPA8.

The protein localises to the nucleus. The protein resides in the cytoplasm. Atypical homeodomain protein which does not bind DNA and is required to modulate cardiac growth and development. Acts via its interaction with SRF, thereby modulating the expression of SRF-dependent cardiac-specific genes and cardiac development. Prevents SRF-dependent transcription either by inhibiting SRF binding to DNA or by recruiting histone deacetylase (HDAC) proteins that prevent transcription by SRF. Overexpression causes cardiac hypertrophy. Acts as a co-chaperone for HSPA1A and HSPA1B chaperone proteins and assists in chaperone-mediated protein refolding. The polypeptide is Homeodomain-only protein (HOPX) (Bos taurus (Bovine)).